Reading from the N-terminus, the 400-residue chain is 3-phenylpropionate/cinnamic acid dioxygenase ferredoxin--NAD(+) reductase component (400 aa).

Residue 5–36 (TIIIVGGGQAAAMAAASLRQQGFTGELHLFSD) participates in FAD binding. 146 to 174 (SVVIVGAGTIGLELAASATQRRCKVTVIE) provides a ligand contact to NAD(+).

The protein belongs to the bacterial ring-hydroxylating dioxygenase ferredoxin reductase family. This dioxygenase system consists of four proteins: the two subunits of the hydroxylase component (HcaE and HcaF), a ferredoxin (HcaC) and a ferredoxin reductase (HcaD). The cofactor is FAD.

The enzyme catalyses 2 reduced [2Fe-2S]-[ferredoxin] + NAD(+) + H(+) = 2 oxidized [2Fe-2S]-[ferredoxin] + NADH. It participates in aromatic compound metabolism; 3-phenylpropanoate degradation. Part of the multicomponent 3-phenylpropionate dioxygenase, that converts 3-phenylpropionic acid (PP) and cinnamic acid (CI) into 3-phenylpropionate-dihydrodiol (PP-dihydrodiol) and cinnamic acid-dihydrodiol (CI-dihydrodiol), respectively. This is 3-phenylpropionate/cinnamic acid dioxygenase ferredoxin--NAD(+) reductase component from Escherichia coli (strain 55989 / EAEC).